The primary structure comprises 147 residues: Small ribosomal subunit protein uS12 (147 aa).

Belongs to the universal ribosomal protein uS12 family. Part of the 30S ribosomal subunit.

Its function is as follows. With S4 and S5 plays an important role in translational accuracy. Located at the interface of the 30S and 50S subunits. The sequence is that of Small ribosomal subunit protein uS12 from Saccharolobus solfataricus (strain ATCC 35092 / DSM 1617 / JCM 11322 / P2) (Sulfolobus solfataricus).